The chain runs to 354 residues: UPF0283 membrane protein plu2581 (354 aa).

3 helical membrane passes run 71–91 (MVYG…VQWI), 101–121 (SALG…GSLV), and 214–234 (ESAL…FIAW).

It belongs to the UPF0283 family.

The protein localises to the cell inner membrane. The protein is UPF0283 membrane protein plu2581 of Photorhabdus laumondii subsp. laumondii (strain DSM 15139 / CIP 105565 / TT01) (Photorhabdus luminescens subsp. laumondii).